The sequence spans 161 residues: MTKGPVRLDVAVSYALPRAGLPSAVSFRKWVAAALKGRIREADLAVRVVDEKEGCSLNHHYRGKDYATNVLSFPAELPEGLPKGIKMPLLGDLVICAPVVAREAAEQGKLLAAHYAHLTVHGTLHLLGWDHEDDKEAEAMEQLEREILADLGIDDPYAGEH.

The Zn(2+) site is built by histidine 121, histidine 125, and histidine 131.

This sequence belongs to the endoribonuclease YbeY family. Zn(2+) serves as cofactor.

It is found in the cytoplasm. Its function is as follows. Single strand-specific metallo-endoribonuclease involved in late-stage 70S ribosome quality control and in maturation of the 3' terminus of the 16S rRNA. In Xanthomonas euvesicatoria pv. vesicatoria (strain 85-10) (Xanthomonas campestris pv. vesicatoria), this protein is Endoribonuclease YbeY.